The chain runs to 500 residues: Cytochrome P450 monooxygenase ausI (500 aa).

The chain crosses the membrane as a helical span at residues 8-28; it reads LALLGQPLVPGLMVVSAILYL. Cys-440 contributes to the heme binding site.

This sequence belongs to the cytochrome P450 family. It depends on heme as a cofactor.

Its subcellular location is the membrane. The protein operates within secondary metabolite biosynthesis; terpenoid biosynthesis. In terms of biological role, cytochrome P450 monooxygenase; part of the gene cluster B that mediates the biosynthesis of the fungal meroterpenoid acetoxydehydroaustin. The first step of the pathway is the synthesis of 3,5-dimethylorsellinic acid by the polyketide synthase ausA. 3,5-dimethylorsellinic acid is then prenylated by the polyprenyl transferase ausN. Further epoxidation by the FAD-dependent monooxygenase ausM and cyclization by the probable terpene cyclase ausL lead to the formation of protoaustinoid A. Protoaustinoid A is then oxidized to spiro-lactone preaustinoid A3 by the combined action of the FAD-binding monooxygenases ausB and ausC, and the dioxygenase ausE. Acid-catalyzed keto-rearrangement and ring contraction of the tetraketide portion of preaustinoid A3 by ausJ lead to the formation of preaustinoid A4. The aldo-keto reductase ausK, with the help of ausH, is involved in the next step by transforming preaustinoid A4 into isoaustinone which is in turn hydroxylated by the P450 monooxygenase ausI to form austinolide. The cytochrome P450 monooxygenase ausG then modifies austinolide to austinol. Austinol is further acetylated to austin by the O-acetyltransferase ausP, which spontaneously changes to dehydroaustin. The cytochrome P450 monooxygenase then converts dehydroaustin is into 7-dehydrodehydroaustin. The hydroxylation catalyzed by ausR permits the second O-acetyltransferase ausQ to add an additional acetyl group to the molecule, leading to the formation of acetoxydehydroaustin. Due to genetic rearrangements of the clusters and the subsequent loss of some enzymes, the end product of the Penicillium brasilianum austinoid biosynthesis clusters is acetoxydehydroaustin. The chain is Cytochrome P450 monooxygenase ausI from Penicillium brasilianum.